Here is a 407-residue protein sequence, read N- to C-terminus: Succinate--CoA ligase [ADP-forming] subunit beta, hydrogenosomal (407 aa).

Residues 1-9 constitute a hydrogenosome transit peptide; it reads MLSSSFARN. Residues 18–261 form the ATP-grasp domain; it reads KEICAKYNVA…LKQVNPFEIR (244 aa). Residues Lys55, 62 to 64, and Glu124 contribute to the ATP site; that span reads GRG. Residues Asn216 and Asp230 each coordinate Mg(2+). Substrate is bound by residues Asn281 and 338 to 340; that span reads GIV.

It belongs to the succinate/malate CoA ligase beta subunit family. As to quaternary structure, heterodimer of an alpha and a beta subunit. It depends on Mg(2+) as a cofactor.

The protein resides in the hydrogenosome. The enzyme catalyses succinate + ATP + CoA = succinyl-CoA + ADP + phosphate. It functions in the pathway carbohydrate metabolism; tricarboxylic acid cycle; succinate from succinyl-CoA (ligase route): step 1/1. Its function is as follows. Succinyl-CoA synthetase functions in the citric acid cycle (TCA), coupling the hydrolysis of succinyl-CoA to the synthesis of ATP and thus represents the only step of substrate-level phosphorylation in the TCA. The beta subunit provides nucleotide specificity of the enzyme and binds the substrate succinate, while the binding sites for coenzyme A and phosphate are found in the alpha subunit. The protein is Succinate--CoA ligase [ADP-forming] subunit beta, hydrogenosomal of Trichomonas vaginalis.